We begin with the raw amino-acid sequence, 86 residues long: Protein Tat (86 aa).

The tract at residues 1–24 (MDPVDPNQEPWNHPGSQPRTACNN) is interaction with human CREBBP. Positions 1–48 (MDPVDPNQEPWNHPGSQPRTACNNCYCKKCCYHCQLCFLKKGLGIYYG) are transactivation. Cysteine 22, cysteine 25, and cysteine 27 together coordinate Zn(2+). Residues 22–37 (CNNCYCKKCCYHCQLC) form a cysteine-rich region. N6-acetyllysine; by host PCAF is present on lysine 28. 4 residues coordinate Zn(2+): cysteine 30, histidine 33, cysteine 34, and cysteine 37. Residues 38–48 (FLKKGLGIYYG) form a core region. Basic residues predominate over residues 48–58 (GRKKRRQRRGT). The segment at 48-86 (GRKKRRQRRGTPKSLQDHQTLIPKQPLSRTSGDPTGPEK) is disordered. A Nuclear localization signal, RNA-binding (TAR), and protein transduction motif is present at residues 49–57 (RKKRRQRRG). Residues 49 to 86 (RKKRRQRRGTPKSLQDHQTLIPKQPLSRTSGDPTGPEK) form an interaction with the host capping enzyme RNGTT region. Residues lysine 50 and lysine 51 each carry the N6-acetyllysine; by host EP300 and GCN5L2 modification. Residues arginine 52 and arginine 53 each carry the asymmetric dimethylarginine; by host PRMT6 modification. Lysine 71 is covalently cross-linked (Glycyl lysine isopeptide (Lys-Gly) (interchain with G-Cter in ubiquitin)).

The protein belongs to the lentiviruses Tat family. In terms of assembly, interacts with host CCNT1. Associates with the P-TEFb complex composed at least of Tat, P-TEFb (CDK9 and CCNT1), TAR RNA, RNA Pol II. Recruits the HATs CREBBP, TAF1/TFIID, EP300, PCAF and GCN5L2. Interacts with host KAT5/Tip60; this interaction targets the latter to degradation. Interacts with the host deacetylase SIRT1. Interacts with host capping enzyme RNGTT; this interaction stimulates RNGTT. Binds to host KDR, and to the host integrins ITGAV/ITGB3 and ITGA5/ITGB1. Interacts with host KPNB1/importin beta-1 without previous binding to KPNA1/importin alpha-1. Interacts with EIF2AK2. Interacts with host nucleosome assembly protein NAP1L1; this interaction may be required for the transport of Tat within the nucleus, since the two proteins interact at the nuclear rim. Interacts with host C1QBP/SF2P32; this interaction involves lysine-acetylated Tat. Interacts with the host chemokine receptors CCR2, CCR3 and CXCR4. Interacts with host DPP4/CD26; this interaction may trigger an anti-proliferative effect. Interacts with host LDLR. Interacts with the host extracellular matrix metalloproteinase MMP1. Interacts with host PRMT6; this interaction mediates Tat's methylation. Interacts with, and is ubiquitinated by MDM2/Hdm2. Interacts with host PSMC3 and HTATIP2. Interacts with STAB1; this interaction may overcome SATB1-mediated repression of IL2 and IL2RA (interleukin) in T cells by binding to the same domain than HDAC1. Interacts (when acetylated) with human CDK13, thereby increasing HIV-1 mRNA splicing and promoting the production of the doubly spliced HIV-1 protein Nef. Interacts with host TBP; this interaction modulates the activity of transcriptional pre-initiation complex. Interacts with host RELA. Interacts with host PLSCR1; this interaction negatively regulates Tat transactivation activity by altering its subcellular distribution. In terms of processing, asymmetrical arginine methylation by host PRMT6 seems to diminish the transactivation capacity of Tat and affects the interaction with host CCNT1. Post-translationally, acetylation by EP300, CREBBP, GCN5L2/GCN5 and PCAF regulates the transactivation activity of Tat. EP300-mediated acetylation of Lys-50 promotes dissociation of Tat from the TAR RNA through the competitive binding to PCAF's bromodomain. In addition, the non-acetylated Tat's N-terminus can also interact with PCAF. PCAF-mediated acetylation of Lys-28 enhances Tat's binding to CCNT1. Lys-50 is deacetylated by SIRT1. Polyubiquitination by host MDM2 does not target Tat to degradation, but activates its transactivation function and fosters interaction with CCNT1 and TAR RNA. In terms of processing, phosphorylated by EIF2AK2 on serine and threonine residues adjacent to the basic region important for TAR RNA binding and function. Phosphorylation of Tat by EIF2AK2 is dependent on the prior activation of EIF2AK2 by dsRNA.

The protein resides in the host nucleus. The protein localises to the host nucleolus. Its subcellular location is the host cytoplasm. It is found in the secreted. In terms of biological role, transcriptional activator that increases RNA Pol II processivity, thereby increasing the level of full-length viral transcripts. Recognizes a hairpin structure at the 5'-LTR of the nascent viral mRNAs referred to as the transactivation responsive RNA element (TAR) and recruits the cyclin T1-CDK9 complex (P-TEFb complex) that will in turn hyperphosphorylate the RNA polymerase II to allow efficient elongation. The CDK9 component of P-TEFb and other Tat-activated kinases hyperphosphorylate the C-terminus of RNA Pol II that becomes stabilized and much more processive. Other factors such as HTATSF1/Tat-SF1, SUPT5H/SPT5, and HTATIP2 are also important for Tat's function. Besides its effect on RNA Pol II processivity, Tat induces chromatin remodeling of proviral genes by recruiting the histone acetyltransferases (HATs) CREBBP, EP300 and PCAF to the chromatin. This also contributes to the increase in proviral transcription rate, especially when the provirus integrates in transcriptionally silent region of the host genome. To ensure maximal activation of the LTR, Tat mediates nuclear translocation of NF-kappa-B by interacting with host RELA. Through its interaction with host TBP, Tat may also modulate transcription initiation. Tat can reactivate a latently infected cell by penetrating in it and transactivating its LTR promoter. In the cytoplasm, Tat is thought to act as a translational activator of HIV-1 mRNAs. Functionally, extracellular circulating Tat can be endocytosed by surrounding uninfected cells via the binding to several surface receptors such as CD26, CXCR4, heparan sulfate proteoglycans (HSPG) or LDLR. Neurons are rarely infected, but they internalize Tat via their LDLR. Through its interaction with nuclear HATs, Tat is potentially able to control the acetylation-dependent cellular gene expression. Modulates the expression of many cellular genes involved in cell survival, proliferation or in coding for cytokines or cytokine receptors. Tat plays a role in T-cell and neurons apoptosis. Tat induced neurotoxicity and apoptosis probably contribute to neuroAIDS. Circulating Tat also acts as a chemokine-like and/or growth factor-like molecule that binds to specific receptors on the surface of the cells, affecting many cellular pathways. In the vascular system, Tat binds to ITGAV/ITGB3 and ITGA5/ITGB1 integrins dimers at the surface of endothelial cells and competes with bFGF for heparin-binding sites, leading to an excess of soluble bFGF. The protein is Protein Tat of Human immunodeficiency virus type 1 group M subtype H (isolate VI991) (HIV-1).